A 180-amino-acid polypeptide reads, in one-letter code: uncharacterized protein (180 aa).

This sequence belongs to the CdaR family.

This is an uncharacterized protein from Thermomonospora curvata.